Consider the following 629-residue polypeptide: tRNA uridine 5-carboxymethylaminomethyl modification enzyme MnmG (629 aa).

FAD contacts are provided by residues 15–20, V127, and S182; that span reads GAGHAG. The segment at 203–226 is disordered; the sequence is TPPRVKSSTIDYSKTEEQPGDDHP. The segment covering 215-226 has biased composition (basic and acidic residues); that stretch reads SKTEEQPGDDHP. 274–288 contributes to the NAD(+) binding site; sequence GARYCPSIEDKIVRF. Q371 contacts FAD.

Belongs to the MnmG family. In terms of assembly, homodimer. Heterotetramer of two MnmE and two MnmG subunits. FAD serves as cofactor.

It is found in the cytoplasm. Functionally, NAD-binding protein involved in the addition of a carboxymethylaminomethyl (cmnm) group at the wobble position (U34) of certain tRNAs, forming tRNA-cmnm(5)s(2)U34. The polypeptide is tRNA uridine 5-carboxymethylaminomethyl modification enzyme MnmG (Listeria monocytogenes serovar 1/2a (strain ATCC BAA-679 / EGD-e)).